We begin with the raw amino-acid sequence, 128 residues long: uncharacterized protein (128 aa).

This is an uncharacterized protein from Caenorhabditis elegans.